The primary structure comprises 228 residues: uncharacterized protein (228 aa).

The protein belongs to the HAD-like hydrolase superfamily.

It localises to the cytoplasm. The protein resides in the nucleus. This is an uncharacterized protein from Schizosaccharomyces pombe (strain 972 / ATCC 24843) (Fission yeast).